Here is a 275-residue protein sequence, read N- to C-terminus: Undecaprenyl-diphosphatase (275 aa).

The next 8 helical transmembrane spans lie at 1 to 21 (MDWV…FLPI), 42 to 62 (VKDA…LVYY), 80 to 100 (TLWT…LAFG), 107 to 127 (LFKP…MWLI), 147 to 167 (SLLI…SRSA), 184 to 204 (TKFS…LNLV), 214 to 234 (IGLL…YLAI), and 249 to 269 (FAVY…TGVM).

It belongs to the UppP family.

Its subcellular location is the cell membrane. The catalysed reaction is di-trans,octa-cis-undecaprenyl diphosphate + H2O = di-trans,octa-cis-undecaprenyl phosphate + phosphate + H(+). In terms of biological role, catalyzes the dephosphorylation of undecaprenyl diphosphate (UPP). Confers resistance to bacitracin. The sequence is that of Undecaprenyl-diphosphatase from Deinococcus deserti (strain DSM 17065 / CIP 109153 / LMG 22923 / VCD115).